A 435-amino-acid chain; its full sequence is ATP-dependent RNA helicase RhlB (435 aa).

Positions 9 to 37 match the Q motif motif; sequence QKFADLGLNPQVVEGLEKKGFEFCTPIQA. Residues 40-219 enclose the Helicase ATP-binding domain; sequence LPVLLSGQDI…FEHMHNPEHV (180 aa). 53-60 is a binding site for ATP; the sequence is AQTGTGKT. Residues 165–168 carry the DEAD box motif; sequence DEAD. The Helicase C-terminal domain occupies 245–390; the sequence is ALLQTLIEEE…VSDYDSSALI (146 aa). The segment at 395 to 435 is disordered; sequence APVRTPSARNQQRRTNTGGARSGDRKSNNRRPRQPRQHKEA. Positions 401-413 are enriched in polar residues; the sequence is SARNQQRRTNTGG. The span at 422-435 shows a compositional bias: basic residues; sequence NNRRPRQPRQHKEA.

The protein belongs to the DEAD box helicase family. RhlB subfamily. Component of the RNA degradosome, which is a multiprotein complex involved in RNA processing and mRNA degradation.

It is found in the cytoplasm. The enzyme catalyses ATP + H2O = ADP + phosphate + H(+). Functionally, DEAD-box RNA helicase involved in RNA degradation. Has RNA-dependent ATPase activity and unwinds double-stranded RNA. This chain is ATP-dependent RNA helicase RhlB, found in Vibrio vulnificus (strain CMCP6).